The primary structure comprises 281 residues: Probable ABC transporter ATP-binding protein AZC_3926 (281 aa).

A disordered region spans residues 1–38 (MNVLSMFGRNATRETSSPAATAGRYADEGDWEGDDHQP). The ABC transporter domain maps to 45-277 (LAAFGLAKSY…PDVRRLYLGE (233 aa)). An ATP-binding site is contributed by 77 to 84 (GPNGAGKT).

Belongs to the ABC transporter superfamily.

The protein is Probable ABC transporter ATP-binding protein AZC_3926 of Azorhizobium caulinodans (strain ATCC 43989 / DSM 5975 / JCM 20966 / LMG 6465 / NBRC 14845 / NCIMB 13405 / ORS 571).